A 78-amino-acid polypeptide reads, in one-letter code: Putative defensin-like protein 202 (78 aa).

Positions 1–29 are cleaved as a signal peptide; the sequence is MAKTQNFVCFTAVLLILILVSTEIPMIEG. Disulfide bonds link cysteine 44-cysteine 65, cysteine 49-cysteine 74, and cysteine 53-cysteine 76.

It belongs to the DEFL family.

The protein localises to the secreted. The sequence is that of Putative defensin-like protein 202 from Arabidopsis thaliana (Mouse-ear cress).